The sequence spans 415 residues: Serine hydroxymethyltransferase 2 (415 aa).

(6S)-5,6,7,8-tetrahydrofolate-binding positions include Leu121 and 125-127 (GHL). An N6-(pyridoxal phosphate)lysine modification is found at Lys229.

The protein belongs to the SHMT family. Homodimer. Pyridoxal 5'-phosphate serves as cofactor.

It localises to the cytoplasm. It carries out the reaction (6R)-5,10-methylene-5,6,7,8-tetrahydrofolate + glycine + H2O = (6S)-5,6,7,8-tetrahydrofolate + L-serine. Its pathway is one-carbon metabolism; tetrahydrofolate interconversion. It participates in amino-acid biosynthesis; glycine biosynthesis; glycine from L-serine: step 1/1. Its function is as follows. Catalyzes the reversible interconversion of serine and glycine with tetrahydrofolate (THF) serving as the one-carbon carrier. This reaction serves as the major source of one-carbon groups required for the biosynthesis of purines, thymidylate, methionine, and other important biomolecules. Also exhibits THF-independent aldolase activity toward beta-hydroxyamino acids, producing glycine and aldehydes, via a retro-aldol mechanism. This Bordetella bronchiseptica (strain ATCC BAA-588 / NCTC 13252 / RB50) (Alcaligenes bronchisepticus) protein is Serine hydroxymethyltransferase 2.